The primary structure comprises 254 residues: Imidazole glycerol phosphate synthase subunit HisF (254 aa).

Residues D11 and D130 contribute to the active site.

It belongs to the HisA/HisF family. In terms of assembly, heterodimer of HisH and HisF.

The protein resides in the cytoplasm. The catalysed reaction is 5-[(5-phospho-1-deoxy-D-ribulos-1-ylimino)methylamino]-1-(5-phospho-beta-D-ribosyl)imidazole-4-carboxamide + L-glutamine = D-erythro-1-(imidazol-4-yl)glycerol 3-phosphate + 5-amino-1-(5-phospho-beta-D-ribosyl)imidazole-4-carboxamide + L-glutamate + H(+). The protein operates within amino-acid biosynthesis; L-histidine biosynthesis; L-histidine from 5-phospho-alpha-D-ribose 1-diphosphate: step 5/9. Functionally, IGPS catalyzes the conversion of PRFAR and glutamine to IGP, AICAR and glutamate. The HisF subunit catalyzes the cyclization activity that produces IGP and AICAR from PRFAR using the ammonia provided by the HisH subunit. The polypeptide is Imidazole glycerol phosphate synthase subunit HisF (Halorhodospira halophila (strain DSM 244 / SL1) (Ectothiorhodospira halophila (strain DSM 244 / SL1))).